The primary structure comprises 333 residues: Flotillin-like protein FloA (333 aa).

2 helical membrane-spanning segments follow: residues 8–28 (LMPI…FTFI) and 30–50 (VGLW…TLVG).

Belongs to the flotillin-like FloA family. In terms of assembly, homooligomerizes.

The protein resides in the cell membrane. Its subcellular location is the membrane raft. In terms of biological role, found in functional membrane microdomains (FMM) that may be equivalent to eukaryotic membrane rafts. FMMs are highly dynamic and increase in number as cells age. Flotillins are thought to be important factors in membrane fluidity. This chain is Flotillin-like protein FloA, found in Desulfitobacterium hafniense (strain DSM 10664 / DCB-2).